A 189-amino-acid polypeptide reads, in one-letter code: Haloacid dehalogenase-like hydrolase domain-containing protein 3 (189 aa).

The protein belongs to the HAD-like hydrolase superfamily.

This chain is Haloacid dehalogenase-like hydrolase domain-containing protein 3 (hdhd3), found in Xenopus tropicalis (Western clawed frog).